The chain runs to 694 residues: Methionine--tRNA ligase (694 aa).

The short motif at 12–22 (PYANGPLHLGH) is the 'HIGH' region element. Zn(2+)-binding residues include Cys-143, Cys-146, Cys-156, and Cys-159. Positions 330-334 (KMSKS) match the 'KMSKS' region motif. ATP is bound at residue Lys-333. Residues 552-577 (APAAPAATTKPAPSKADAAPAAVANP) are disordered. One can recognise a tRNA-binding domain in the interval 591–694 (DFAKLDLRIG…AGAQPGMPVR (104 aa)).

It belongs to the class-I aminoacyl-tRNA synthetase family. MetG type 1 subfamily. Homodimer. It depends on Zn(2+) as a cofactor.

It is found in the cytoplasm. The catalysed reaction is tRNA(Met) + L-methionine + ATP = L-methionyl-tRNA(Met) + AMP + diphosphate. Is required not only for elongation of protein synthesis but also for the initiation of all mRNA translation through initiator tRNA(fMet) aminoacylation. This chain is Methionine--tRNA ligase, found in Xanthomonas campestris pv. campestris (strain B100).